The chain runs to 339 residues: Fructose-1,6-bisphosphatase isozyme 2 (339 aa).

An important for interaction with ALDOA region spans residues 3–10 (DRSPFETD). Residues valine 18 and 28–32 (TGELT) contribute to the AMP site. Mg(2+)-binding residues include aspartate 69 and glutamate 98. 113-114 (KY) contributes to the AMP binding site. Mg(2+)-binding residues include aspartate 119, leucine 121, and aspartate 122. Substrate is bound at residue aspartate 122. Arginine 141 provides a ligand contact to AMP. The short motif at 204-208 (KKKGK) is the Nuclear localization signal element. 213-216 (NEGY) serves as a coordination point for substrate. Phosphotyrosine occurs at positions 216 and 219. Residues 245-249 (YVGSM), tyrosine 265, and lysine 275 each bind substrate. Glutamate 281 is a Mg(2+) binding site.

This sequence belongs to the FBPase class 1 family. As to quaternary structure, homotetramer. Interacts with ALDOA; the interaction blocks inhibition by physiological concentrations of AMP and reduces inhibition by Ca(2+). Interacts with alpha-actinin and F-actin. Mg(2+) serves as cofactor.

The protein resides in the cell junction. It is found in the cytoplasm. Its subcellular location is the nucleus. It localises to the myofibril. The protein localises to the sarcomere. The protein resides in the z line. The catalysed reaction is beta-D-fructose 1,6-bisphosphate + H2O = beta-D-fructose 6-phosphate + phosphate. Its pathway is carbohydrate biosynthesis; gluconeogenesis. Subject to complex allosteric regulation. The enzyme can assume an active R-state, or an inactive T-state. Intermediate conformations may exist. AMP acts as an allosteric inhibitor. Fructose 2,6-bisphosphate acts as a competitive inhibitor. Strongly inhibited by Ca(2+). In terms of biological role, catalyzes the hydrolysis of fructose 1,6-bisphosphate to fructose 6-phosphate in the presence of divalent cations and probably participates in glycogen synthesis from carbohydrate precursors, such as lactate. This is Fructose-1,6-bisphosphatase isozyme 2 (FBP2) from Oryctolagus cuniculus (Rabbit).